The following is a 127-amino-acid chain: Large ribosomal subunit protein bL17 (127 aa).

The protein belongs to the bacterial ribosomal protein bL17 family. As to quaternary structure, part of the 50S ribosomal subunit. Contacts protein L32.

This is Large ribosomal subunit protein bL17 from Leuconostoc mesenteroides subsp. mesenteroides (strain ATCC 8293 / DSM 20343 / BCRC 11652 / CCM 1803 / JCM 6124 / NCDO 523 / NBRC 100496 / NCIMB 8023 / NCTC 12954 / NRRL B-1118 / 37Y).